Consider the following 458-residue polypeptide: BPI fold-containing family B member 2 (458 aa).

Positions 1–20 (MAWASRLGLLLALLLPVVGA) are cleaved as a signal peptide. T52 carries the post-translational modification Phosphothreonine; by FAM20C. S60 carries the phosphoserine; by FAM20C modification. N-linked (GlcNAc...) asparagine glycans are attached at residues N96, N151, N293, and N332. C137 and C174 form a disulfide bridge.

Belongs to the BPI/LBP/Plunc superfamily. BPI/LBP family. As to expression, highly expressed in tonsils, especially in hypertrophic tonsils. Detected at very low levels in fetal liver.

Its subcellular location is the secreted. The protein is BPI fold-containing family B member 2 (BPIFB2) of Homo sapiens (Human).